The sequence spans 294 residues: MFLMEKLLERVNYILEALPYITQYSGKTVVIKYGGAAMAKADLKESFAKDIVLLKYVGIHPVIVHGGGPEINRLLDNLKIPTEFVHGHRVTDNQTMEIVEMVLTGKVNKQIVSLINSQGGKAVGISGKDGNLAKATKAPIEIELEGKEKQLFDVGLVGKIESVNPEILHNLQKAGFIPVISPVAENSEGESLNINADTFAGEIAGALKAEKLILLTDTQGILIDNQLVTGLNRNKVKDYIRKGEISGGMIPKVECCLTAIDQGVRRTHIIDGRVSHSILIEIFTDQGIGSLIES.

Substrate-binding positions include 67–68, R89, and N193; that span reads GG.

Belongs to the acetylglutamate kinase family. ArgB subfamily.

The protein localises to the cytoplasm. The enzyme catalyses N-acetyl-L-glutamate + ATP = N-acetyl-L-glutamyl 5-phosphate + ADP. The protein operates within amino-acid biosynthesis; L-arginine biosynthesis; N(2)-acetyl-L-ornithine from L-glutamate: step 2/4. Catalyzes the ATP-dependent phosphorylation of N-acetyl-L-glutamate. The chain is Acetylglutamate kinase from Leptospira interrogans serogroup Icterohaemorrhagiae serovar copenhageni (strain Fiocruz L1-130).